Consider the following 394-residue polypeptide: 1-deoxy-D-xylulose 5-phosphate reductoisomerase (394 aa).

The NADPH site is built by T10, G11, S12, I13, G38, R39, N40, and N123. Residue K124 participates in 1-deoxy-D-xylulose 5-phosphate binding. NADPH is bound at residue E125. D149 contributes to the Mn(2+) binding site. Residues S150, E151, S175, and H198 each contribute to the 1-deoxy-D-xylulose 5-phosphate site. Position 151 (E151) interacts with Mn(2+). Residue G204 participates in NADPH binding. The 1-deoxy-D-xylulose 5-phosphate site is built by S211, N216, K217, and E220. Mn(2+) is bound at residue E220.

It belongs to the DXR family. It depends on Mg(2+) as a cofactor. Mn(2+) serves as cofactor.

The enzyme catalyses 2-C-methyl-D-erythritol 4-phosphate + NADP(+) = 1-deoxy-D-xylulose 5-phosphate + NADPH + H(+). Its pathway is isoprenoid biosynthesis; isopentenyl diphosphate biosynthesis via DXP pathway; isopentenyl diphosphate from 1-deoxy-D-xylulose 5-phosphate: step 1/6. Catalyzes the NADPH-dependent rearrangement and reduction of 1-deoxy-D-xylulose-5-phosphate (DXP) to 2-C-methyl-D-erythritol 4-phosphate (MEP). This is 1-deoxy-D-xylulose 5-phosphate reductoisomerase from Cereibacter sphaeroides (strain KD131 / KCTC 12085) (Rhodobacter sphaeroides).